We begin with the raw amino-acid sequence, 80 residues long: Omega-conotoxin-like PuIA (80 aa).

Residues 1-22 (MKLTCVMIVAVLFLTAWTFVTA) form the signal peptide. The propeptide occupies 23-50 (DSIRALEDLFAKAPDEMENSGASPLNER). 3 disulfide bridges follow: cysteine 52–cysteine 70, cysteine 59–cysteine 74, and cysteine 69–cysteine 78.

This sequence belongs to the conotoxin O1 superfamily. In terms of tissue distribution, expressed by the venom duct.

The protein resides in the secreted. Functionally, omega-conotoxins act at presynaptic membranes, they bind and block voltage-gated calcium channels (Cav). This chain is Omega-conotoxin-like PuIA, found in Conus pulicarius (Flea-bitten cone).